We begin with the raw amino-acid sequence, 166 residues long: Short form salivary protein D7R5 (166 aa).

The first 22 residues, 1–22 (MEWRYFVVIALICPLIIVETLA), serve as a signal peptide directing secretion. Disulfide bonds link Cys26/Cys58, Cys39/Cys166, and Cys98/Cys117.

This sequence belongs to the PBP/GOBP family.

It is found in the secreted. Functionally, in contrast to the related D7 salivary proteins, does not bind biogenic amines such as serotonin, noradrenaline, histamine and adrenaline. It is hypothesized that either D7r5 evolved an as yet unknown function or is becoming a pseudogene. The polypeptide is Short form salivary protein D7R5 (Anopheles gambiae (African malaria mosquito)).